Consider the following 180-residue polypeptide: Fetal and adult testis-expressed transcript protein homolog (180 aa).

Residues 77 to 108 (GPQLRGVGVVGEQGDGGAQPQENPGGSQGMRS) are disordered. Over residues 84-93 (GVVGEQGDGG) the composition is skewed to gly residues. A compositionally biased stretch (polar residues) spans 96–107 (PQENPGGSQGMR). A helical membrane pass occupies residues 160–178 (VLLFTMLLSSCITNLWLWM).

Interacts with BIK and RNF183. Interacts with IMMT/MIC60and EMD.

It localises to the mitochondrion. It is found in the mitochondrion outer membrane. The protein localises to the endoplasmic reticulum membrane. In terms of biological role, involved in the regulation of endoplasmic reticulum (ER)-mitochondria coupling. Negatively regulates the ER-mitochondria distance and Ca(2+) transfer from ER to mitochondria possibly implicating it in the regulation of apoptosis. May collaborate with RNF183 to restrain BIK protein levels thus regulating apoptotic signaling. This is Fetal and adult testis-expressed transcript protein homolog (FATE1) from Bos taurus (Bovine).